We begin with the raw amino-acid sequence, 232 residues long: 5'-methylthioadenosine/S-adenosylhomocysteine nucleosidase (232 aa).

The Proton acceptor role is filled by Glu-12. Residues Gly-78, Ile-152, and Met-173–Glu-174 each bind substrate. Asp-197 functions as the Proton donor in the catalytic mechanism.

It belongs to the PNP/UDP phosphorylase family. MtnN subfamily. In terms of assembly, homodimer.

The catalysed reaction is S-adenosyl-L-homocysteine + H2O = S-(5-deoxy-D-ribos-5-yl)-L-homocysteine + adenine. The enzyme catalyses S-methyl-5'-thioadenosine + H2O = 5-(methylsulfanyl)-D-ribose + adenine. It catalyses the reaction 5'-deoxyadenosine + H2O = 5-deoxy-D-ribose + adenine. It functions in the pathway amino-acid biosynthesis; L-methionine biosynthesis via salvage pathway; S-methyl-5-thio-alpha-D-ribose 1-phosphate from S-methyl-5'-thioadenosine (hydrolase route): step 1/2. Catalyzes the irreversible cleavage of the glycosidic bond in both 5'-methylthioadenosine (MTA) and S-adenosylhomocysteine (SAH/AdoHcy) to adenine and the corresponding thioribose, 5'-methylthioribose and S-ribosylhomocysteine, respectively. Also cleaves 5'-deoxyadenosine, a toxic by-product of radical S-adenosylmethionine (SAM) enzymes, into 5-deoxyribose and adenine. Thus, is required for in vivo function of the radical SAM enzymes biotin synthase and lipoic acid synthase, that are inhibited by 5'-deoxyadenosine accumulation. The protein is 5'-methylthioadenosine/S-adenosylhomocysteine nucleosidase of Klebsiella pneumoniae subsp. pneumoniae (strain ATCC 700721 / MGH 78578).